The chain runs to 130 residues: Protein NrdI (130 aa).

This sequence belongs to the NrdI family.

Functionally, probably involved in ribonucleotide reductase function. In Bartonella bacilliformis (strain ATCC 35685 / KC583 / Herrer 020/F12,63), this protein is Protein NrdI.